A 377-amino-acid chain; its full sequence is Stimulator of interferon genes protein 7 (377 aa).

4 helical membrane passes run 30-50, 57-77, 106-126, and 141-161; these read TAAI…FLAV, THFL…GELL, FTFD…LILC, and FAIL…LVGL.

This sequence belongs to the STING family.

It localises to the membrane. Facilitator of innate immune signaling that acts as a sensor of second messenger signals produced by cyclic GMP-AMP synthase-like receptors (cGLRs) and promotes the production of type I interferon. Innate immune response is triggered in response to nucleotides from viruses and bacteria delivered to the cytoplasm. Acts by binding cyclic dinucleotides: recognizes and binds a large variety of 2'-3'- and 3'-3' linked cyclic dinucleotides (2'-3'-cGAMP, 3'-3'-cGAMP, 2',3'-cUAMP, 3',3'-cUAMP and/or 3',3'-c-di-GMP) second messengers produced by cGLRs in response to nucleotides in the cytosol, such as double-stranded RNA (dsRNA). Upon binding to cyclic dinucleotides, oligomerizes and promotes the recruitment and subsequent activation of the transcription factor IRF3 to induce expression of type I interferon. This chain is Stimulator of interferon genes protein 7, found in Stylophora pistillata (Smooth cauliflower coral).